We begin with the raw amino-acid sequence, 157 residues long: 2-C-methyl-D-erythritol 2,4-cyclodiphosphate synthase (157 aa).

A divalent metal cation-binding residues include D8 and H10. Residues 8–10 and 34–35 contribute to the 4-CDP-2-C-methyl-D-erythritol 2-phosphate site; these read DVH and HS. An a divalent metal cation-binding site is contributed by H42. Residues 56 to 58, 61 to 65, 100 to 106, 132 to 135, F139, and R142 contribute to the 4-CDP-2-C-methyl-D-erythritol 2-phosphate site; these read DIG, FPDTD, AQAPKMA, and TTTE.

The protein belongs to the IspF family. Homotrimer. It depends on a divalent metal cation as a cofactor.

The enzyme catalyses 4-CDP-2-C-methyl-D-erythritol 2-phosphate = 2-C-methyl-D-erythritol 2,4-cyclic diphosphate + CMP. The protein operates within isoprenoid biosynthesis; isopentenyl diphosphate biosynthesis via DXP pathway; isopentenyl diphosphate from 1-deoxy-D-xylulose 5-phosphate: step 4/6. Functionally, involved in the biosynthesis of isopentenyl diphosphate (IPP) and dimethylallyl diphosphate (DMAPP), two major building blocks of isoprenoid compounds. Catalyzes the conversion of 4-diphosphocytidyl-2-C-methyl-D-erythritol 2-phosphate (CDP-ME2P) to 2-C-methyl-D-erythritol 2,4-cyclodiphosphate (ME-CPP) with a corresponding release of cytidine 5-monophosphate (CMP). The sequence is that of 2-C-methyl-D-erythritol 2,4-cyclodiphosphate synthase from Pseudomonas putida (strain GB-1).